The following is a 37-amino-acid chain: Cytochrome b6-f complex subunit 5 (37 aa).

Residues 5–25 traverse the membrane as a helical segment; that stretch reads LLCGIVLGLIPITLMGLFVAA.

The protein belongs to the PetG family. The 4 large subunits of the cytochrome b6-f complex are cytochrome b6, subunit IV (17 kDa polypeptide, PetD), cytochrome f and the Rieske protein, while the 4 small subunits are PetG, PetL, PetM and PetN. The complex functions as a dimer.

It localises to the cellular thylakoid membrane. Its function is as follows. Component of the cytochrome b6-f complex, which mediates electron transfer between photosystem II (PSII) and photosystem I (PSI), cyclic electron flow around PSI, and state transitions. PetG is required for either the stability or assembly of the cytochrome b6-f complex. In Synechococcus sp. (strain CC9311), this protein is Cytochrome b6-f complex subunit 5.